The primary structure comprises 123 residues: UPF0212 protein rrnAC0441 (123 aa).

This sequence belongs to the UPF0212 family.

The polypeptide is UPF0212 protein rrnAC0441 (Haloarcula marismortui (strain ATCC 43049 / DSM 3752 / JCM 8966 / VKM B-1809) (Halobacterium marismortui)).